The sequence spans 203 residues: Glycerol-3-phosphate acyltransferase (203 aa).

A run of 6 helical transmembrane segments spans residues N3–A23, I61–L81, V87–F107, G118–V138, I144–H164, and T172–V192.

The protein belongs to the PlsY family. In terms of assembly, probably interacts with PlsX.

It localises to the cell inner membrane. The enzyme catalyses an acyl phosphate + sn-glycerol 3-phosphate = a 1-acyl-sn-glycero-3-phosphate + phosphate. Its pathway is lipid metabolism; phospholipid metabolism. Its function is as follows. Catalyzes the transfer of an acyl group from acyl-phosphate (acyl-PO(4)) to glycerol-3-phosphate (G3P) to form lysophosphatidic acid (LPA). This enzyme utilizes acyl-phosphate as fatty acyl donor, but not acyl-CoA or acyl-ACP. The protein is Glycerol-3-phosphate acyltransferase of Campylobacter concisus (strain 13826).